The primary structure comprises 281 residues: Putative phosphatase/phosphodiesterase MG246 (281 aa).

Fe cation-binding residues include Asp-11, Glu-42, Asn-43, and Asn-70. The Proton donor role is filled by His-71. Fe cation contacts are provided by His-157, His-182, and His-184.

It belongs to the YmdB-like family. The cofactor is Fe(3+).

The chain is Putative phosphatase/phosphodiesterase MG246 from Mycoplasma genitalium (strain ATCC 33530 / DSM 19775 / NCTC 10195 / G37) (Mycoplasmoides genitalium).